The following is a 366-amino-acid chain: uncharacterized protein (366 aa).

Glu139 serves as the catalytic Proton donor. Glu249 acts as the Nucleophile in catalysis.

It belongs to the glycosyl hydrolase 53 family.

This is an uncharacterized protein from Niallia circulans (Bacillus circulans).